A 38-amino-acid chain; its full sequence is ATP synthase subunit O, mitochondrial (38 aa).

Belongs to the ATPase delta chain family. As to quaternary structure, F-type ATPases have 2 components, CF(1) - the catalytic core - and CF(0) - the membrane proton channel. CF(1) has five subunits: alpha(3), beta(3), gamma(1), delta(1), epsilon(1). CF(0) has three main subunits: a, b and c.

The protein resides in the mitochondrion. Its subcellular location is the mitochondrion inner membrane. Mitochondrial membrane ATP synthase (F(1)F(0) ATP synthase or Complex V) produces ATP from ADP in the presence of a proton gradient across the membrane which is generated by electron transport complexes of the respiratory chain. F-type ATPases consist of two structural domains, F(1) - containing the extramembraneous catalytic core and F(0) - containing the membrane proton channel, linked together by a central stalk and a peripheral stalk. During catalysis, ATP synthesis in the catalytic domain of F(1) is coupled via a rotary mechanism of the central stalk subunits to proton translocation. Part of the complex F(0) domain and the peripheric stalk, which acts as a stator to hold the catalytic alpha(3)beta(3) subcomplex and subunit a/ATP6 static relative to the rotary elements. In Pisum sativum (Garden pea), this protein is ATP synthase subunit O, mitochondrial.